Reading from the N-terminus, the 198-residue chain is Dynein axonemal light chain 1 (198 aa).

LRR repeat units follow at residues 49-70, 71-92, 94-115, and 116-137; these read ACKH…SGME, NLRI…DAVA, TLEE…EKLV, and NLRV…DKLA. Residues 157–195 enclose the LRRCT domain; it reads KENNATSEYRIEVVKRLPNLKKLDGMPVDVDEREQANVA.

Belongs to the dynein light chain LC1-type family. In terms of assembly, interacts with OCAD2, a outer arm dynein heavy chain. Interacts with tubulin (previously called p45) located within the A-tubule of the outer doublets in a ATP-independent manner.

The protein localises to the cytoplasm. It is found in the cytoskeleton. The protein resides in the flagellum axoneme. Part of the multisubunit axonemal ATPase complexes that generate the force for flagellar motility and govern beat frequency. Component of the outer arm dynein (ODA). May be involved in a mechanosensory feedback mechanism controlling ODA activity based on external conformational cues by tethering the outer arm dynein heavy chain (ODA2) to the A-tubule of the outer doublet microtubules within the axoneme. In Chlamydomonas reinhardtii (Chlamydomonas smithii), this protein is Dynein axonemal light chain 1.